Reading from the N-terminus, the 458-residue chain is ATP synthase subunit beta (458 aa).

148–155 contributes to the ATP binding site; it reads GGAGVGKT.

It belongs to the ATPase alpha/beta chains family. F-type ATPases have 2 components, CF(1) - the catalytic core - and CF(0) - the membrane proton channel. CF(1) has five subunits: alpha(3), beta(3), gamma(1), delta(1), epsilon(1). CF(0) has three main subunits: a(1), b(2) and c(9-12). The alpha and beta chains form an alternating ring which encloses part of the gamma chain. CF(1) is attached to CF(0) by a central stalk formed by the gamma and epsilon chains, while a peripheral stalk is formed by the delta and b chains.

Its subcellular location is the cell inner membrane. It carries out the reaction ATP + H2O + 4 H(+)(in) = ADP + phosphate + 5 H(+)(out). Functionally, produces ATP from ADP in the presence of a proton gradient across the membrane. The catalytic sites are hosted primarily by the beta subunits. This chain is ATP synthase subunit beta, found in Alkalilimnicola ehrlichii (strain ATCC BAA-1101 / DSM 17681 / MLHE-1).